The following is a 273-amino-acid chain: Homeobox protein Nkx-2.2 (273 aa).

Disordered stretches follow at residues 1–56 and 90–131; these read MSLT…LDAV and LAAG…KRKR. The span at 20–38 shows a compositional bias: acidic residues; it reads DTNDEEGSVAEGPEEENEG. Positions 128 to 187 form a DNA-binding region, homeobox; the sequence is KRKRRVLFSKAQTYELERRFRQQRYLSAPEREHLASLIRLTPTQVKIWFQNHRYKMKRAR.

It belongs to the NK-2 homeobox family. In terms of assembly, interacts with OLIG2.

It localises to the nucleus. Functionally, transcriptional activator involved in the development of insulin-producting beta cells in the endocrine pancreas. May also be involved in specifying diencephalic neuromeric boundaries, and in controlling the expression of genes that play a role in axonal guidance. Binds to elements within the NEUROD1 promoter. This chain is Homeobox protein Nkx-2.2 (NKX2-2), found in Homo sapiens (Human).